Here is a 278-residue protein sequence, read N- to C-terminus: 4-deoxy-L-threo-5-hexosulose-uronate ketol-isomerase (278 aa).

4 residues coordinate Zn(2+): H196, H198, E203, and H245.

Belongs to the KduI family. The cofactor is Zn(2+).

The catalysed reaction is 5-dehydro-4-deoxy-D-glucuronate = 3-deoxy-D-glycero-2,5-hexodiulosonate. Its pathway is glycan metabolism; pectin degradation; 2-dehydro-3-deoxy-D-gluconate from pectin: step 4/5. Functionally, catalyzes the isomerization of 5-dehydro-4-deoxy-D-glucuronate to 3-deoxy-D-glycero-2,5-hexodiulosonate. The sequence is that of 4-deoxy-L-threo-5-hexosulose-uronate ketol-isomerase from Yersinia pestis bv. Antiqua (strain Antiqua).